We begin with the raw amino-acid sequence, 492 residues long: Excitatory amino acid transporter (492 aa).

Over 1 to 7 the chain is Cytoplasmic; the sequence is MVSWIRK. The next 3 helical transmembrane spans lie at 8–28, 47–67, and 85–105; these read NLLL…GFLL, LLMH…LISG, and TYYM…VLVI. At 106–191 the chain is on the extracellular side; sequence HPGDPTIKKE…VKASVEYTSG (86 aa). N-linked (GlcNAc...) asparagine glycosylation is found at Asn-166 and Asn-176. 5 helical membrane passes run 192–212, 228–248, 270–290, 358–378, and 389–409; these read MNVL…SQLG, VIMK…LCLI, VTVL…IFFV, AVAA…GQVV, and IGAA…LTAV.

The protein belongs to the dicarboxylate/amino acid:cation symporter (DAACS) (TC 2.A.23) family.

It is found in the membrane. Its function is as follows. Transports L-glutamate and also L- and D-aspartate. Essential for terminating the postsynaptic action of glutamate by rapidly removing released glutamate from the synaptic cleft. Acts as a symport by cotransporting sodium. The polypeptide is Excitatory amino acid transporter (GLT-1) (Onchocerca volvulus).